The primary structure comprises 121 residues: Large ribosomal subunit protein bL12 (121 aa).

It belongs to the bacterial ribosomal protein bL12 family. Homodimer. Part of the ribosomal stalk of the 50S ribosomal subunit. Forms a multimeric L10(L12)X complex, where L10 forms an elongated spine to which 2 to 4 L12 dimers bind in a sequential fashion. Binds GTP-bound translation factors.

Functionally, forms part of the ribosomal stalk which helps the ribosome interact with GTP-bound translation factors. Is thus essential for accurate translation. The sequence is that of Large ribosomal subunit protein bL12 from Pseudomonas syringae pv. tomato (strain ATCC BAA-871 / DC3000).